Here is a 157-residue protein sequence, read N- to C-terminus: Regulator of Ty1 transposition protein 102 (157 aa).

A Phosphoserine modification is found at Ser-77. Residues 95–157 (SLMTSHTKGD…TKESKDVKMN (63 aa)) are disordered. Polar residues predominate over residues 96 to 116 (LMTSHTKGDTSKATGAPSANQ). Position 122 is a phosphoserine (Ser-122). A compositionally biased stretch (basic and acidic residues) spans 147–157 (NTKESKDVKMN).

Interacts with STH1 and SWI3. Component of the two forms of the RSC complex composed of at least either RSC1 or RSC2, and ARP7, ARP9, LDB7, NPL6, RSC3, RSC30, RSC4, RSC58, RSC6, RSC8, RSC9, SFH1, STH1, HTL1 and probably RTT102. The complexes interact with histone and histone variant components of centromeric chromatin. Probable additional component of the SWI/SNF global transcription activator complex. The 1.14 MDa SWI/SNF complex is composed of 11 different subunits: one copy each of SWI1, SNF2/SWI2, SNF5, SNF12/SWP73, ARP7/SWP61, ARP9/SWP59; two copies each of SWI3, SNF6, SNF11, SWP82; and three copies of TAF14/SWP29.

Its subcellular location is the nucleus. In terms of biological role, probable component of the chromatin structure-remodeling complex (RSC) which is involved in transcription regulation and nucleosome positioning. RSC is responsible for the transfer of a histone octamer from a nucleosome core particle to naked DNA. The reaction requires ATP and involves an activated RSC-nucleosome intermediate. Remodeling reaction also involves DNA translocation, DNA twist and conformational change. As a reconfigurer of centromeric and flanking nucleosomes, RSC complex is required both for proper kinetochore function in chromosome segregation and, via a PKC1-dependent signaling pathway, for organization of the cellular cytoskeleton. Probable component of the SWI/SNF complex, an ATP-dependent chromatin-remodeling complex, is required for the positive and negative regulation of gene expression of a large number of genes. It changes chromatin structure by altering DNA-histone contacts within a nucleosome, leading eventually to a change in nucleosome position, thus facilitating or repressing binding of gene-specific transcription factors. The polypeptide is Regulator of Ty1 transposition protein 102 (RTT102) (Saccharomyces cerevisiae (strain ATCC 204508 / S288c) (Baker's yeast)).